We begin with the raw amino-acid sequence, 748 residues long: CCR4-NOT transcription complex subunit 10-A (748 aa).

The span at 1-17 shows a compositional bias: basic and acidic residues; it reads MAADKAGEQGAEKHEDS. 4 disordered regions span residues 1–25, 184–205, 483–524, and 605–635; these read MAAD…GISD, SNNK…EPFA, KQEN…PPSS, and VSLG…QMPQ. Over residues 185-200 the composition is skewed to low complexity; sequence NNKNGKNNETNSNANN. Composition is skewed to polar residues over residues 487–509 and 605–615; these read GSKT…VCSN and VSLGVSSNEQE.

The protein belongs to the CNOT10 family. Component of the CCR4-NOT complex. cnot10 and cnot11 form a subcomplex docked to the cnot1 scaffold.

The protein resides in the cytoplasm. Its subcellular location is the nucleus. Component of the CCR4-NOT complex which is one of the major cellular mRNA deadenylases and is linked to various cellular processes including bulk mRNA degradation, miRNA-mediated repression, translational repression during translational initiation and general transcription regulation. Additional complex functions may be a consequence of its influence on mRNA expression. Is not required for association of CNOT7 to the CCR4-NOT complex. This chain is CCR4-NOT transcription complex subunit 10-A (cnot10-a), found in Xenopus laevis (African clawed frog).